The sequence spans 380 residues: Tryptophan 2,3-dioxygenase (380 aa).

Residues 57–61 (FIITH) and arginine 128 each bind substrate. Histidine 313 is a heme binding site. Residue threonine 328 coordinates substrate.

It belongs to the tryptophan 2,3-dioxygenase family. In terms of assembly, homotetramer. Dimer of dimers. Heme serves as cofactor.

It catalyses the reaction L-tryptophan + O2 = N-formyl-L-kynurenine. The protein operates within amino-acid degradation; L-tryptophan degradation via kynurenine pathway; L-kynurenine from L-tryptophan: step 1/2. Its pathway is pigment biosynthesis; ommochrome biosynthesis. Heme-dependent dioxygenase that catalyzes the oxidative cleavage of the L-tryptophan (L-Trp) pyrrole ring and converts L-tryptophan to N-formyl-L-kynurenine. Catalyzes the oxidative cleavage of the indole moiety. The sequence is that of Tryptophan 2,3-dioxygenase from Drosophila persimilis (Fruit fly).